We begin with the raw amino-acid sequence, 388 residues long: MNLHEYQAKQLFARYGLPAPVGYACTTPREAEEAASKIGAGPWVVKCQVHAGGRGKAGGVKVVKSKEEIRAFAEHWLGKRLVTYQTDANGQPVNQILVEAATDIDKELYLGAVVDRSSRRVVFMASTEGGVEIEKVAEETPHLIHKIAIDPLAGPMPYQGRELAFKLGLEGKQVQQFTKIFMGLATIFLERDLALIEINPLVITKQGDLICLDGKLGADGNALFRQPDLREMRDQSQEDPREAQAAQWELNYVALDGNIGCMVNGAGLAMGTMDIVKLHGGEPANFLDVGGGATKERVTEAFKIILSDDNVKAVLVNIFGGIVRCDLIADGIIGAVAEVGVNVPVVVRLEGNNAELGAKKLADSGLNIIAAKSLTDAAQQVVAAVEGK.

The 236-residue stretch at Lys-9–Gln-244 folds into the ATP-grasp domain. ATP is bound by residues Lys-46, Gly-53–Gly-55, Glu-99, Thr-102, and Glu-107. 2 residues coordinate Mg(2+): Asn-199 and Asp-213. Residues Asn-264 and Gly-321–Val-323 each bind substrate.

Belongs to the succinate/malate CoA ligase beta subunit family. As to quaternary structure, heterotetramer of two alpha and two beta subunits. Requires Mg(2+) as cofactor.

The enzyme catalyses succinate + ATP + CoA = succinyl-CoA + ADP + phosphate. It catalyses the reaction GTP + succinate + CoA = succinyl-CoA + GDP + phosphate. The protein operates within carbohydrate metabolism; tricarboxylic acid cycle; succinate from succinyl-CoA (ligase route): step 1/1. Functionally, succinyl-CoA synthetase functions in the citric acid cycle (TCA), coupling the hydrolysis of succinyl-CoA to the synthesis of either ATP or GTP and thus represents the only step of substrate-level phosphorylation in the TCA. The beta subunit provides nucleotide specificity of the enzyme and binds the substrate succinate, while the binding sites for coenzyme A and phosphate are found in the alpha subunit. The protein is Succinate--CoA ligase [ADP-forming] subunit beta of Klebsiella pneumoniae (strain 342).